The sequence spans 294 residues: NAD kinase (294 aa).

Aspartate 73 (proton acceptor) is an active-site residue. NAD(+) contacts are provided by residues 73-74 (DG), 147-148 (NE), histidine 158, arginine 175, aspartate 177, 188-193 (TAYSLS), and glutamine 249.

The protein belongs to the NAD kinase family. A divalent metal cation is required as a cofactor.

The protein localises to the cytoplasm. The enzyme catalyses NAD(+) + ATP = ADP + NADP(+) + H(+). In terms of biological role, involved in the regulation of the intracellular balance of NAD and NADP, and is a key enzyme in the biosynthesis of NADP. Catalyzes specifically the phosphorylation on 2'-hydroxyl of the adenosine moiety of NAD to yield NADP. In Aeromonas salmonicida (strain A449), this protein is NAD kinase.